Reading from the N-terminus, the 254-residue chain is UDP-2,3-diacylglucosamine hydrolase (254 aa).

Mn(2+) contacts are provided by Asp8, His10, Asp41, Asn79, and His114. A substrate-binding site is contributed by Asn79–Arg80. Residues Asp122, Ser160, Asn164, Lys167, and His195 each coordinate substrate. Positions 195 and 197 each coordinate Mn(2+).

Belongs to the LpxH family. Mn(2+) serves as cofactor.

The protein localises to the cell inner membrane. It carries out the reaction UDP-2-N,3-O-bis[(3R)-3-hydroxytetradecanoyl]-alpha-D-glucosamine + H2O = 2-N,3-O-bis[(3R)-3-hydroxytetradecanoyl]-alpha-D-glucosaminyl 1-phosphate + UMP + 2 H(+). Its pathway is glycolipid biosynthesis; lipid IV(A) biosynthesis; lipid IV(A) from (3R)-3-hydroxytetradecanoyl-[acyl-carrier-protein] and UDP-N-acetyl-alpha-D-glucosamine: step 4/6. Functionally, hydrolyzes the pyrophosphate bond of UDP-2,3-diacylglucosamine to yield 2,3-diacylglucosamine 1-phosphate (lipid X) and UMP by catalyzing the attack of water at the alpha-P atom. Involved in the biosynthesis of lipid A, a phosphorylated glycolipid that anchors the lipopolysaccharide to the outer membrane of the cell. The sequence is that of UDP-2,3-diacylglucosamine hydrolase from Aeromonas salmonicida (strain A449).